An 847-amino-acid polypeptide reads, in one-letter code: Ras GTPase-activating protein 2 (847 aa).

The span at 1-21 (MAAAAPAAAASPEAPAVSGSA) shows a compositional bias: low complexity. A disordered region spans residues 1–31 (MAAAAPAAAASPEAPAVSGSADPETGDEDSR). Alanine 2 carries the post-translational modification N-acetylalanine. C2 domains follow at residues 19–137 (GSAD…ETWF) and 148–288 (VQGK…QAWY). The region spanning 371–588 (NKLVPFITAV…TDVKKFLDEI (218 aa)) is the Ras-GAP domain. Serine 554 is subject to Phosphoserine. The PH domain occupies 603–704 (VHLKEGEMYK…WIDVLCRVSR (102 aa)). Residues 706 to 742 (NHNRLSSFHPSAYLNGNWLCCQETSESTPGCKPCTAG) form a Btk-type zinc finger. Positions 714, 725, 726, and 736 each coordinate Zn(2+). The disordered stretch occupies residues 819–847 (DEPHEKYRKKRSSSAKYGSKENPIVGKIS).

It localises to the cell membrane. Its function is as follows. Inhibitory regulator of the Ras-cyclic AMP pathway. Binds inositol tetrakisphosphate (IP4) and phospholipids. The chain is Ras GTPase-activating protein 2 (Rasa2) from Mus musculus (Mouse).